The following is a 367-amino-acid chain: Leucine-rich repeat-containing protein 28 (367 aa).

LRR repeat units follow at residues 16–36 (KHKN…ELLK), 42–63 (YLER…LAQK), 66–87 (NLVE…IGSL), 89–111 (KLQS…GRLK), 112–133 (SLRH…IGKL), 135–156 (ELQT…LYQC), 158–179 (SLQY…LCQL), 181–202 (SLNE…LGRS), and 204–226 (ELQY…LYNK).

The protein is Leucine-rich repeat-containing protein 28 (lrrc28) of Xenopus tropicalis (Western clawed frog).